The primary structure comprises 389 residues: Alanine racemase (389 aa).

K48 (proton acceptor; specific for D-alanine) is an active-site residue. K48 is subject to N6-(pyridoxal phosphate)lysine. R144 serves as a coordination point for substrate. The active-site Proton acceptor; specific for L-alanine is Y281. Substrate is bound at residue M329.

This sequence belongs to the alanine racemase family. Pyridoxal 5'-phosphate serves as cofactor.

The catalysed reaction is L-alanine = D-alanine. It participates in amino-acid biosynthesis; D-alanine biosynthesis; D-alanine from L-alanine: step 1/1. Functionally, catalyzes the interconversion of L-alanine and D-alanine. May also act on other amino acids. The sequence is that of Alanine racemase (alr) from Leptospira interrogans serogroup Icterohaemorrhagiae serovar Lai (strain 56601).